The primary structure comprises 384 residues: BTB and MATH domain-containing protein 34 (384 aa).

Residues Leu-41–Lys-127 are a coiled coil. The MATH domain maps to Glu-167–Ile-277. The BTB domain maps to Ser-317–Arg-380.

This chain is BTB and MATH domain-containing protein 34 (bath-34), found in Caenorhabditis elegans.